We begin with the raw amino-acid sequence, 1047 residues long: Suppression of tumorigenicity 18 protein (1047 aa).

3 disordered regions span residues 41–92 (TAED…HSTA), 168–221 (FLIH…VPKY), and 251–286 (DSETERKDPQNALAEPLDGNAQPSFPDVEEEDSESL). Residues 52–65 (NKRKSLLMKPRHYS) show a composition bias toward basic residues. Residues 171–181 (HSDDGRDKIDD) are compositionally biased toward basic and acidic residues. 2 consecutive CCHHC-type zinc fingers follow at residues 359–402 (PRPE…PLEI) and 403–446 (LAMH…KLAM). Zn(2+)-binding residues include Cys-368, Cys-373, His-386, Cys-392, Cys-412, Cys-417, His-430, and Cys-436. Disordered stretches follow at residues 523–563 (GRKT…SYSY) and 672–710 (YSKTHGKTEEEKEKDPVSSLENLEEKKFPGEASIPSPKP). Positions 550-563 (AHTQSPGRASSYSY) are enriched in polar residues. The segment covering 677–687 (GKTEEEKEKDP) has biased composition (basic and acidic residues). 4 consecutive CCHHC-type zinc fingers follow at residues 715–758 (RDLK…LKSL), 759–802 (MAAN…GVKM), 807–850 (EEKE…QKEN), and 860–903 (KLNK…IKKG). Cys-724, Cys-729, His-742, Cys-748, Cys-768, Cys-773, His-786, Cys-792, Cys-816, Cys-821, His-834, Cys-840, Cys-869, Cys-874, His-887, and Cys-893 together coordinate Zn(2+). Residues 920-992 (IESDEEIRHL…AGLSQALISS (73 aa)) adopt a coiled-coil conformation.

Belongs to the MYT1 family. In terms of tissue distribution, detected at low levels in heart, liver, kidney, skeletal muscle, pancreas, testis, ovary and prostate. Detected at even lower levels in mammary epithelial cells and breast cancer cells.

The protein localises to the nucleus. In terms of biological role, repressor that binds to DNA sequences containing a bipartite element consisting of a direct repeat of the sequence 5'-AAAGTTT-3' separated by 2-9 nucleotides. Represses basal transcription activity from target promoters. Inhibits colony formation in cultured breast cancer cells. The protein is Suppression of tumorigenicity 18 protein (ST18) of Homo sapiens (Human).